A 602-amino-acid chain; its full sequence is Aspartate--tRNA(Asp/Asn) ligase (602 aa).

Glu170 contributes to the L-aspartate binding site. An aspartate region spans residues 194 to 197 (QLFK). Arg216 contacts L-aspartate. Residues 216-218 (RDE) and Gln225 contribute to the ATP site. His448 contacts L-aspartate. Glu482 is an ATP binding site. Arg489 is a binding site for L-aspartate. Position 534-537 (534-537 (GWDR)) interacts with ATP. The segment at 559-602 (GGVDPLTNAPAPITAQQRKESGVDAKPEPKGDAASAKPDAPADK) is disordered. Basic and acidic residues predominate over residues 575–589 (QRKESGVDAKPEPKG). A compositionally biased stretch (low complexity) spans 590–602 (DAASAKPDAPADK).

Belongs to the class-II aminoacyl-tRNA synthetase family. Type 1 subfamily. As to quaternary structure, homodimer.

The protein resides in the cytoplasm. The catalysed reaction is tRNA(Asx) + L-aspartate + ATP = L-aspartyl-tRNA(Asx) + AMP + diphosphate. Aspartyl-tRNA synthetase with relaxed tRNA specificity since it is able to aspartylate not only its cognate tRNA(Asp) but also tRNA(Asn). Reaction proceeds in two steps: L-aspartate is first activated by ATP to form Asp-AMP and then transferred to the acceptor end of tRNA(Asp/Asn). This is Aspartate--tRNA(Asp/Asn) ligase from Rhodococcus jostii (strain RHA1).